We begin with the raw amino-acid sequence, 371 residues long: Assembly protein G7 (371 aa).

It belongs to the chordopoxvirinae G7 family. Part of a complex composed of A30, G7, F10 kinase, A15, D2, D3, and J1. In terms of processing, phosphorylated on serines by F10 kinase, phosphorylation state is regulated by H1 phosphatase. Post-translationally, undergoes proteolytic processing during morphogenesis, probably required for the transformation of immature virions (IV) into mature virions (MV).

It localises to the host cytoplasm. The protein localises to the virion. Functionally, late protein which is a part of a large complex required for early virion morphogenesis. This complex participates in the formation of virosomes and the incorporation of virosomal contents into nascent immature virions. The polypeptide is Assembly protein G7 (Homo sapiens (Human)).